Consider the following 194-residue polypeptide: Fe/S biogenesis protein NfuA (194 aa).

[4Fe-4S] cluster is bound by residues Cys-152 and Cys-155.

It belongs to the NfuA family. Homodimer. Requires [4Fe-4S] cluster as cofactor.

Its function is as follows. Involved in iron-sulfur cluster biogenesis. Binds a 4Fe-4S cluster, can transfer this cluster to apoproteins, and thereby intervenes in the maturation of Fe/S proteins. Could also act as a scaffold/chaperone for damaged Fe/S proteins. This Stutzerimonas stutzeri (strain A1501) (Pseudomonas stutzeri) protein is Fe/S biogenesis protein NfuA.